We begin with the raw amino-acid sequence, 248 residues long: Deoxyribose-phosphate aldolase (248 aa).

Catalysis depends on Asp106, which acts as the Proton donor/acceptor. Lys168 acts as the Schiff-base intermediate with acetaldehyde in catalysis. The active-site Proton donor/acceptor is Lys197.

Belongs to the DeoC/FbaB aldolase family. DeoC type 1 subfamily.

The protein resides in the cytoplasm. The enzyme catalyses 2-deoxy-D-ribose 5-phosphate = D-glyceraldehyde 3-phosphate + acetaldehyde. It functions in the pathway carbohydrate degradation; 2-deoxy-D-ribose 1-phosphate degradation; D-glyceraldehyde 3-phosphate and acetaldehyde from 2-deoxy-alpha-D-ribose 1-phosphate: step 2/2. Functionally, catalyzes a reversible aldol reaction between acetaldehyde and D-glyceraldehyde 3-phosphate to generate 2-deoxy-D-ribose 5-phosphate. This chain is Deoxyribose-phosphate aldolase, found in Sinorhizobium medicae (strain WSM419) (Ensifer medicae).